Reading from the N-terminus, the 250-residue chain is Entry-fusion complex associated protein OPG095 (250 aa).

The N-myristoyl glycine; by host moiety is linked to residue Gly2. Residues 2–12 (GAAASIQTTVN) form a targeting to MV membrane region. Residues 2–183 (GAAASIQTTV…IAPKQVAGTG (182 aa)) lie on the Virion surface side of the membrane. Cystine bridges form between Cys34–Cys57, Cys49–Cys136, and Cys116–Cys158. Residues 184 to 204 (VQFYMIVIGVIILAALFMYYA) form a helical membrane-spanning segment. Over 205–250 (KRMLFTSTNDKIKLILANKENVHWTTYMDTFFRTSPMVIATTDMQN) the chain is Intravirion.

It belongs to the orthopoxvirus OPG095 family. Component of the entry fusion complex (EFC) composed of OPG053/F9, OPG076/O3, OPG086/G3, OPG094/G9, OPG095/L1, OPG099/L5, OPG107/H2, OPG143/A16, OPG104/J5, OPG147/A21 and OPG155/A28. Except for OPG095/L1 and OPG053/F9, each of the EFC proteins is required for assembly or stability of the complex. Myristoylated. Post-translationally, disulfid bonds are oxidized in the cytoplasm by OPG088 protein. In terms of processing, unglycosylated because produced in viral factories instead of the classic ER -Golgi route.

The protein resides in the virion membrane. In terms of biological role, component of the entry fusion complex (EFC), which consists of 11 proteins. During cell infection, this complex mediates entry of the virion core into the host cytoplasm by a two-step mechanism consisting of lipid mixing of the viral and cellular membranes and subsequent pore formation. This is Entry-fusion complex associated protein OPG095 (OPG099) from Bos taurus (Bovine).